The following is a 341-amino-acid chain: Aromatic amino acid aminotransferase (341 aa).

Lysine 213 is subject to N6-(pyridoxal phosphate)lysine.

It belongs to the class-II pyridoxal-phosphate-dependent aminotransferase family. As to quaternary structure, homodimer. The cofactor is pyridoxal 5'-phosphate.

It carries out the reaction an aromatic L-alpha-amino acid + 2-oxoglutarate = an aromatic oxo-acid + L-glutamate. In terms of biological role, aminotransferase that catalyzes the conversion of aromatic amino acids and 2-oxoglutarate into corresponding aromatic oxo acids and L-glutamate. May catalyze the transamination reaction in phenylalanine biosynthesis. The chain is Aromatic amino acid aminotransferase from Corynebacterium glutamicum (strain ATCC 13032 / DSM 20300 / JCM 1318 / BCRC 11384 / CCUG 27702 / LMG 3730 / NBRC 12168 / NCIMB 10025 / NRRL B-2784 / 534).